Consider the following 525-residue polypeptide: AP-4 complex accessory subunit Tepsin (525 aa).

The ENTH domain maps to 8–141; it reads RDRLSFLHRL…FSDTVLPLAP (134 aa). The disordered stretch occupies residues 139 to 229; it reads LAPSQPLGTP…SHSGASREPG (91 aa). Over residues 193 to 225 the composition is skewed to low complexity; it reads SGPSSQNSSQNSDLSRVSDSGSHSGSDSHSGAS. Phosphoserine is present on residues S333 and S356. The interval 355-465 is disordered; sequence LSPARGTSAE…PKRGPSSCAW (111 aa). Residues 393–412 show a composition bias toward low complexity; it reads PLSSTPVSSRSPAPSSGMPS. Positions 413–429 are enriched in pro residues; that stretch reads SPVPTPPPDASPIPAPG. Positions 434–448 are enriched in basic and acidic residues; it reads AEARLAESRRWRPER. Residues 467–477 form an interaction with AP4B1 region; it reads RDSLFAGMELV. Residues 487–525 form a disordered region; that stretch reads AAAGESCPDAPRAPQTSSQRTAAKEPPGSEPSAFAFLNA. The interaction with AP4E1 stretch occupies residues 515-525; the sequence is SEPSAFAFLNA.

In terms of assembly, interacts with AP4B1 and AP4E1; the interaction is direct and mediates the association of TEPSIN with the adapter-like complex 4 (AP-4), a heterotetramer composed of AP4B1, AP4E1, AP4M1 and AP4S1.

The protein localises to the golgi apparatus. It is found in the trans-Golgi network membrane. The protein resides in the cytoplasmic vesicle. Its subcellular location is the cytoplasm. It localises to the cytosol. Its function is as follows. Associates with the adapter-like complex 4 (AP-4) and may therefore play a role in vesicular trafficking of proteins at the trans-Golgi network. In Homo sapiens (Human), this protein is AP-4 complex accessory subunit Tepsin.